The primary structure comprises 88 residues: Small ribosomal subunit protein bS20 (88 aa).

A compositionally biased stretch (basic residues) spans 1–10; that stretch reads MANHKSSLKR. The disordered stretch occupies residues 1-24; that stretch reads MANHKSSLKRAKQDIVRNTRNKSR.

Belongs to the bacterial ribosomal protein bS20 family.

Binds directly to 16S ribosomal RNA. The polypeptide is Small ribosomal subunit protein bS20 (Desulfosudis oleivorans (strain DSM 6200 / JCM 39069 / Hxd3) (Desulfococcus oleovorans)).